The chain runs to 208 residues: FMN-dependent NADH:quinone oxidoreductase (208 aa).

Residues 17 to 19, 99 to 102, and 143 to 146 each bind FMN; these read SNS, MWNL, and SRGG.

Belongs to the azoreductase type 1 family. As to quaternary structure, homodimer. The cofactor is FMN.

It catalyses the reaction 2 a quinone + NADH + H(+) = 2 a 1,4-benzosemiquinone + NAD(+). The enzyme catalyses N,N-dimethyl-1,4-phenylenediamine + anthranilate + 2 NAD(+) = 2-(4-dimethylaminophenyl)diazenylbenzoate + 2 NADH + 2 H(+). Quinone reductase that provides resistance to thiol-specific stress caused by electrophilic quinones. In terms of biological role, also exhibits azoreductase activity. Catalyzes the reductive cleavage of the azo bond in aromatic azo compounds to the corresponding amines. The sequence is that of FMN-dependent NADH:quinone oxidoreductase from Staphylococcus aureus (strain COL).